We begin with the raw amino-acid sequence, 133 residues long: Heat shock protein 15 (133 aa).

Residues 9–71 (VRLDKWLWAA…DERTVIVKAI (63 aa)) form the S4 RNA-binding domain. Residues 105–133 (NALTMPHPDRRPDKKERRDLLRFKHGDSE) form a disordered region. Residues 111–133 (HPDRRPDKKERRDLLRFKHGDSE) are compositionally biased toward basic and acidic residues.

It belongs to the HSP15 family. As to quaternary structure, monomer.

Functionally, involved in the recycling of free 50S ribosomal subunits that still carry a nascent chain. Binds RNA more specifically than DNA. Binds with very high affinity to the free 50S ribosomal subunit. Does not bind it when it is part of the 70S ribosome. This is Heat shock protein 15 (hslR) from Escherichia coli O157:H7.